The sequence spans 241 residues: 3-deoxy-D-manno-octulosonic acid kinase (241 aa).

Asp-171 is an active-site residue.

The protein belongs to the protein kinase superfamily. KdkA/RfaP family.

It is found in the cell inner membrane. The catalysed reaction is an alpha-Kdo-(2-&gt;6)-lipid IVA + ATP = a 4-O-phospho-alpha-Kdo-(2-&gt;6)-lipid IVA + ADP + H(+). The protein operates within bacterial outer membrane biogenesis; LPS core biosynthesis. Its function is as follows. Catalyzes the ATP-dependent phosphorylation of the 3-deoxy-D-manno-octulosonic acid (Kdo) residue in Kdo-lipid IV(A) at the 4-OH position. This chain is 3-deoxy-D-manno-octulosonic acid kinase, found in Haemophilus influenzae (strain PittEE).